We begin with the raw amino-acid sequence, 1181 residues long: 1-phosphatidylinositol 4,5-bisphosphate phosphodiesterase beta-2 (1181 aa).

The region spanning 312–463 (QDMTQPLNHY…LRGKILIKNK (152 aa)) is the PI-PLC X-box domain. Residue histidine 327 is part of the active site. 3 residues coordinate Ca(2+): asparagine 328, glutamate 357, and aspartate 359. Histidine 374 is an active-site residue. Residue glutamate 408 coordinates Ca(2+). The segment at 465-534 (NQFSGPASPS…EEIKKMQSDE (70 aa)) is disordered. Residues 503–525 (TEVEEEEVVEEEEEEESGNLDEE) show a composition bias toward acidic residues. The region spanning 547-663 (MSSLVNYIQP…GYLLKHEFMR (117 aa)) is the PI-PLC Y-box domain. Residues 666–791 (DKQFNPFSVD…CLRSESNMAL (126 aa)) form the C2 domain. The segment at 847–890 (SGTPVASQSNGAPVSAGNGSTAPGTKATGEEATKEVTEPQTASL) is disordered. The segment covering 850–869 (PVASQSNGAPVSAGNGSTAP) has biased composition (polar residues). Residues 874–883 (TGEEATKEVT) are compositionally biased toward basic and acidic residues. The stretch at 893–940 (LRELKGVVKLQRRHEKELRELERRGARRWEELLQRGAAQLAELQTQAA) forms a coiled coil. A Phosphoserine modification is found at serine 950. 2 coiled-coil regions span residues 974–1026 (PRVQ…AELK) and 1075–1141 (HIQE…VRAY). The tract at residues 1149–1181 (EAEDKPERSCEASEESCPQEPLVSKADTQESRL) is disordered. Basic and acidic residues predominate over residues 1150–1159 (AEDKPERSCE).

In terms of assembly, interacts with RAC1. Forms a complex composed of at least WDR26, a G-beta:gamma unit, and PLCB2. The cofactor is Ca(2+).

The enzyme catalyses a 1,2-diacyl-sn-glycero-3-phospho-(1D-myo-inositol-4,5-bisphosphate) + H2O = 1D-myo-inositol 1,4,5-trisphosphate + a 1,2-diacyl-sn-glycerol + H(+). It catalyses the reaction a 1,2-diacyl-sn-glycero-3-phospho-(1D-myo-inositol) + H2O = 1D-myo-inositol 1-phosphate + a 1,2-diacyl-sn-glycerol + H(+). In terms of biological role, the production of the second messenger molecules diacylglycerol (DAG) and inositol 1,4,5-trisphosphate (IP3) is mediated by activated phosphatidylinositol-specific phospholipase C enzymes. In neutrophils, participates in a phospholipase C-activating N-formyl peptide-activated GPCR (G protein-coupled receptor) signaling pathway by promoting RASGRP4 activation by DAG, to promote neutrophil functional responses. This is 1-phosphatidylinositol 4,5-bisphosphate phosphodiesterase beta-2 from Mus musculus (Mouse).